A 416-amino-acid chain; its full sequence is Alpha-1,3/1,6-mannosyltransferase ALG2 (416 aa).

At 1-84 (MAEEQGRERD…LPRGLGWGGR (84 aa)) the chain is on the cytoplasmic side. The segment at residues 85 to 105 (GAAVCAYVRMVFLALYVLFLA) is an intramembrane region (helical). Topologically, residues 106-416 (DEEFDVVVCD…LYRYVTKLLV (311 aa)) are cytoplasmic.

This sequence belongs to the glycosyltransferase group 1 family. Glycosyltransferase 4 subfamily.

Its subcellular location is the endoplasmic reticulum membrane. The catalysed reaction is a beta-D-Man-(1-&gt;4)-beta-D-GlcNAc-(1-&gt;4)-alpha-D-GlcNAc-diphospho-di-trans,poly-cis-dolichol + GDP-alpha-D-mannose = an alpha-D-Man-(1-&gt;3)-beta-D-Man-(1-&gt;4)-beta-D-GlcNAc-(1-&gt;4)-alpha-D-GlcNAc-diphospho-di-trans,poly-cis-dolichol + GDP + H(+). It catalyses the reaction an alpha-D-Man-(1-&gt;3)-beta-D-Man-(1-&gt;4)-beta-D-GlcNAc-(1-&gt;4)-alpha-D-GlcNAc-diphospho-di-trans,poly-cis-dolichol + GDP-alpha-D-mannose = an alpha-D-Man-(1-&gt;3)-[alpha-D-Man-(1-&gt;6)]-beta-D-Man-(1-&gt;4)-beta-D-GlcNAc-(1-&gt;4)-alpha-D-GlcNAc-diphospho-di-trans,poly-cis-dolichol + GDP + H(+). The enzyme catalyses a beta-D-Man-(1-&gt;4)-beta-D-GlcNAc-(1-&gt;4)-alpha-D-GlcNAc-diphospho-di-trans,poly-cis-dolichol + GDP-alpha-D-mannose = an alpha-D-Man-(1-&gt;6)-beta-D-Man-(1-&gt;4)-beta-D-GlcNAc-(1-&gt;4)-alpha-D-GlcNAc-diphospho-di-trans,poly-cis-dolichol + GDP + H(+). It carries out the reaction an alpha-D-Man-(1-&gt;6)-beta-D-Man-(1-&gt;4)-beta-D-GlcNAc-(1-&gt;4)-alpha-D-GlcNAc-diphospho-di-trans,poly-cis-dolichol + GDP-alpha-D-mannose = an alpha-D-Man-(1-&gt;3)-[alpha-D-Man-(1-&gt;6)]-beta-D-Man-(1-&gt;4)-beta-D-GlcNAc-(1-&gt;4)-alpha-D-GlcNAc-diphospho-di-trans,poly-cis-dolichol + GDP + H(+). Its pathway is protein modification; protein glycosylation. In terms of biological role, mannosyltransferase that operates in the biosynthetic pathway of dolichol-linked oligosaccharides, the glycan precursors employed in protein asparagine (N)-glycosylation. The assembly of dolichol-linked oligosaccharides begins on the cytosolic side of the endoplasmic reticulum membrane and finishes in its lumen. The sequential addition of sugars to dolichol pyrophosphate produces dolichol-linked oligosaccharides containing fourteen sugars, including two GlcNAcs, nine mannoses and three glucoses. Once assembled, the oligosaccharide is transferred from the lipid to nascent proteins by oligosaccharyltransferases. Catalyzes, on the cytoplasmic face of the endoplasmic reticulum, the addition of the second and third mannose residues to the dolichol-linked oligosaccharide chain, to produce Man3GlcNAc(2)-PP-dolichol core oligosaccharide. Man3GlcNAc(2)-PP-dolichol is a substrate for ALG11, the following enzyme in the biosynthetic pathway. While both alpha 1,3 and alpha 1,6 linkages are possible, the sequential addition of alpha 1,3 followed by alpha 1,6 is probably the preferred route. This Homo sapiens (Human) protein is Alpha-1,3/1,6-mannosyltransferase ALG2 (ALG2).